The chain runs to 188 residues: MAERANDIRPGQVLEHNGGLFSVISIMHTQPGKGGAYIQAEMKNIQTGAKYYERFRSDATIRRAILDEEEYVYLFTEGNIVNLMHPSSYEQIVINLDLLGEKKAYLQDNMKIKVVTYQDKIISAHVPDHVTLTVKETESVIKGQTVTASYKPAILENGIRVNVPQFIKEGDKIVLHTPDNSYYERVKE.

It belongs to the elongation factor P family.

It is found in the cytoplasm. The protein operates within protein biosynthesis; polypeptide chain elongation. Functionally, involved in peptide bond synthesis. Stimulates efficient translation and peptide-bond synthesis on native or reconstituted 70S ribosomes in vitro. Probably functions indirectly by altering the affinity of the ribosome for aminoacyl-tRNA, thus increasing their reactivity as acceptors for peptidyl transferase. The polypeptide is Elongation factor P (Wolbachia pipientis subsp. Culex pipiens (strain wPip)).